Consider the following 135-residue polypeptide: Large ribosomal subunit protein bL19 (135 aa).

It belongs to the bacterial ribosomal protein bL19 family.

In terms of biological role, this protein is located at the 30S-50S ribosomal subunit interface and may play a role in the structure and function of the aminoacyl-tRNA binding site. This Xanthomonas oryzae pv. oryzae (strain KACC10331 / KXO85) protein is Large ribosomal subunit protein bL19.